A 132-amino-acid chain; its full sequence is mRNA interferase toxin YafO (132 aa).

Probably forms a complex with the antitoxin YafN which inhibits the mRNA interferase activity.

Its function is as follows. Toxic component of a type II toxin-antitoxin (TA) system. A translation-dependent mRNA interferase. Overexpression causes cessation of cell growth and inhibits cell proliferation via inhibition of translation; this blockage is overcome by subsequent expression of antitoxin YafN. Overexpression causes cleavage of a number of mRNAs in a ribosome-dependent fashion. YafO binding to the 50S ribosomal subunit in the translation complex induces mRNA cleavage 3' to the region protected by the ribosome; YafO alone is not able to digest mRNA. This is mRNA interferase toxin YafO (yafO) from Escherichia coli (strain K12).